Reading from the N-terminus, the 801-residue chain is Transferrin receptor protein 2 (801 aa).

The Cytoplasmic portion of the chain corresponds to 1-83 (MERLWGLFQR…WAAAGRRAAP (83 aa)). Residues 16–45 (PRSSQTVYQRVEGPRKGHLEEEEEDGEEGA) form a disordered region. The Endocytosis signal motif lies at 23–26 (YQRV). Positions 35–45 (EEEEEDGEEGA) are enriched in acidic residues. The chain crosses the membrane as a helical; Signal-anchor for type II membrane protein span at residues 84 to 104 (YLVLTALLIFTGAFLLGYVAF). Residues 105–801 (RGSCQACGDS…GDVWNIDNNF (697 aa)) are Extracellular-facing. N240, N339, N540, and N754 each carry an N-linked (GlcNAc...) asparagine glycan.

It belongs to the peptidase M28 family. M28B subfamily. As to quaternary structure, homodimer. In terms of tissue distribution, predominantly expressed in liver. While the alpha form is also expressed in spleen, lung, muscle, prostate and peripheral blood mononuclear cells, the beta form is expressed in all tissues tested, albeit weakly.

It localises to the cell membrane. It is found in the cytoplasm. Functionally, mediates cellular uptake of transferrin-bound iron in a non-iron dependent manner. May be involved in iron metabolism, hepatocyte function and erythrocyte differentiation. This is Transferrin receptor protein 2 (TFR2) from Homo sapiens (Human).